Reading from the N-terminus, the 220-residue chain is Peptidoglycan hydrolase gp5 (220 aa).

It belongs to the peptidase U40 family. Monomer.

It is found in the virion. Functionally, muralytic enzyme exposed to host peptidoglycan layer after membrane fusion during viral entry. Functions as an exolysin that cleaves the peptide bridge formed by meso-diaminopimelic acid and D-alanine. Also lyses the host cell late in infection to release the virions. The polypeptide is Peptidoglycan hydrolase gp5 (P5) (Pseudomonas savastanoi pv. phaseolicola (Pseudomonas syringae pv. phaseolicola)).